A 211-amino-acid chain; its full sequence is Thymidylate kinase (211 aa).

7–14 (GCEGSGKS) contacts ATP.

Belongs to the thymidylate kinase family.

The catalysed reaction is dTMP + ATP = dTDP + ADP. In terms of biological role, phosphorylation of dTMP to form dTDP in both de novo and salvage pathways of dTTP synthesis. The chain is Thymidylate kinase from Chlamydia abortus (strain DSM 27085 / S26/3) (Chlamydophila abortus).